The following is a 194-amino-acid chain: MSFAEKITGLLARPNQQDPIGPEQPWYLKYGSRLLGIVAAFFAILFGLWNVFSIITLSVSCLVAGILQMVAGFVVMLLEAPCCFVCFGQVNEIAEKVESKPLYFRAGLYIAMAIPPIILCFGLASLFGSGLIFGTGVVYGMMALGKKASAEDMRAAAQQTFGGNTPAQTNDRAGIVNNAQPFSFTGAVGTDSNV.

At 1–34 (MSFAEKITGLLARPNQQDPIGPEQPWYLKYGSRL) the chain is on the cytoplasmic side. Residues 35–55 (LGIVAAFFAILFGLWNVFSII) traverse the membrane as a helical segment. Over 56–65 (TLSVSCLVAG) the chain is Extracellular. The helical transmembrane segment at 66–88 (ILQMVAGFVVMLLEAPCCFVCFG) threads the bilayer. Over 89–106 (QVNEIAEKVESKPLYFRA) the chain is Cytoplasmic. The chain crosses the membrane as a helical span at residues 107 to 127 (GLYIAMAIPPIILCFGLASLF). Topologically, residues 128–194 (GSGLIFGTGV…TGAVGTDSNV (67 aa)) are extracellular. Important for promoting apoptosis regions lie at residues 135–157 (TGVV…RAAA) and 135–192 (TGVV…GTDS).

This sequence belongs to the calcium channel flower family. In terms of assembly, associates with the dally/ magu complex. As to quaternary structure, homomultimer. Associates with the dally/ magu complex. As to expression, detected in the imaginal wing disk (at protein level). In terms of tissue distribution, detected throughout the adult brain, including the optic lobe but, at much lower levels of expression than isoform Lose-A. Detected in the optic lobe (at protein level). Detected throughout the adult brain, including the optic lobe. Expressed in damaged and undamaged optic lobe neurons. As to expression, expressed in optic lobe neurons, with higher levels of expression in suboptimal neurons. Specifically expressed in injury-damaged optic lobe neurons.

The protein localises to the cell membrane. Its subcellular location is the cytoplasmic vesicle. It is found in the secretory vesicle. It localises to the synaptic vesicle membrane. The protein resides in the presynaptic cell membrane. The protein localises to the endosome. Its subcellular location is the synaptic vesicle. Its activity is regulated as follows. Channel activity is inhibited by La(3+), which reduces Ca(2+) influx and thus inhibits it's function in promoting activity-dependent bulk endocytosis (ADBE) in response to high stimuli. Transmembrane protein which mediates synaptic endocytosis, fitness-based cell culling, neuronal culling, morphogen gradient scaling, and calcium transport. Regulates synaptic endocytosis and hence couples exo- with endocytosis. Controls two major modes of synaptic vesicle (SV) endocytosis in the synaptic boutons of neuromuscular junctions (NMJs); Ca(2+) channel-independent Clathrin-mediated endocytosis (CME) in response to mild stimulation, and Ca(2+) channel-dependent activity-dependent bulk endocytosis (ADBE) in response to strong stimulation. Functions in ADBE and subsequent SV reformation from bulk endosomes by initiating Ca(2+) channel-dependent phosphatidylinositol 4,5-bisphosphate (PtdIns(4,5)P2) compartmentalization in synaptic boutons. There it acts at the periactive zone to provide the low Ca(2+) levels required to initiate Calcineurin activation and upregulate PtdIns(4,5)P2. Conversely PtdIns(4,5)P2 enhances fwe Ca(2+) channel-activity, establishing a positive feedback loop that induces PtdIns(4,5)P2 microdomain at the periactive zone. These microdomains trigger bulk membrane invagination (i.e. ADBE) by triggering actin polymerization while also promoting localization of fwe to bulk endosomes, thereby removing the ADBE trigger to reduce endocytosis and prevent excess membrane uptake. PtdIns(4,5)P2 then promotes SV reformation from the bulk endosomes, to coordinate ADBE and subsequent SV reformation. Different combinations of the flower isoforms at the cell membrane are also required for the identification and elimination of suboptimal or supernumerary cells during development, regeneration, and adulthood. Required for the recognition and elimination of unfit cells in the developing wing during cell competition. Also required for efficient identification and elimination of injured, damaged and/or dysfunctional neurons during regeneration of the adult brain. In the developing pupal retina, mediates the elimination of unwanted postmitotic neurons, including supernumerary photoreceptor neurons that form at the periphery of the retina and are contained within incomplete ommatidia units. Downstream of the flower fitness fingerprints, cells identified as unwanted or unfit are eliminated via apoptosis through the expression of ahuizotl (azot). However, the cells marked for elimination by the flower isoforms only undergo apoptosis if additional thresholds are met; (1) their neighboring fit/healthy cells express different levels of the fwe isoforms, and (2) the levels of the protective signal SPARC expressed by the loser or unwanted cells are unable to inhibit caspase activation. These additional thresholds for flower-mediated apoptosis, allows useful cells to recover from transient and limited stress before they are unnecessarily eliminated. Functions with dally and magu in a mechanism of scaling, which utilises apoptosis to ensure that the dpp morphogen gradient, which mediates organ growth, remains proportional to the size of the growing wing. In this mechanism, fwe represses dally- and Magu-dependent activity in expanding the gradient, and dally/Magu inhibits fwe-dependent apoptosis to keep cell death rate low. When the levels of these different proteins are optimally regulated the gradient correctly scales with organ growth but when this fails, fwe-mediated apoptosis is activated to trim the developing tissue to match the correct size of the gradient. Functionally, functions with the other flower isoforms to produce tissue-specific fitness fingerprints that identify unfit or fit cells during cell selection processes in order to maintain tissue health. In the wing imaginal disk, this isoform is highly expressed in healthy/normal cells but is down-regulated in cells with decreased fitness. During cell competition, if levels of this isoform in unfit cells is lower than in the surrounding neighboring cells, the suboptimal cells are recognized as 'loser' cells, and undergo elimination via apoptosis to be replaced by the surrounding healthy 'winner' cell population. In terms of biological role, functions with the other flower isoforms to produce tissue-specific fitness fingerprints that identify unfit or fit cells during cell selection processes in order to maintain tissue health. In the wing imaginal disk, this isoform displays low levels of expression in healthy/normal cells but is up-regulated in cells with decreased fitness. During cell competition, if levels of this isoform in unfit cells is higher than in the surrounding neighboring cells, the suboptimal cells are recognized as 'loser' cells, and undergo elimination via apoptosis to be replaced by the surrounding healthy 'winner' cell population. Its function is as follows. Functions with the other flower isoforms to produce tissue-specific fitness fingerprints that identify unfit cells for cell selection processes during development, regeneration, and to maintain tissue health. During cell competition in certain tissues, marks suboptimal or damaged cells as 'loser' cells. In cells of the wing imaginal disk and damaged or dysfunctional neurons in the adult optic lobe, this isoform displays low to no expression in healthy/normal cells but is up-regulated in cells with decreased fitness or damage-affected neurons. During cell competition, if levels of this isoform in unfit cells is higher than in the surrounding neighboring cells, the suboptimal cells are recognized as 'loser' cells, and undergo elimination via apoptosis to be replaced by the surrounding healthy/undamaged 'winner' cell population. In the developing pupal retina, also required for the recognition and elimination of postmitotic neurons, including supernumerary photoreceptor neurons that form at the periphery of the retina and are contained within incomplete ommatidia units. Activity at the peripheral retina is induced by the wg signaling pathway but, once activated, it promotes apoptosis of supernumerary photoreceptor neurons independently of wg signaling and snail function. This chain is Calcium channel flower (fwe), found in Drosophila melanogaster (Fruit fly).